The primary structure comprises 213 residues: Orotate phosphoribosyltransferase (213 aa).

Lysine 26 contributes to the 5-phospho-alpha-D-ribose 1-diphosphate binding site. An orotate-binding site is contributed by 34–35; that stretch reads FF. 5-phospho-alpha-D-ribose 1-diphosphate is bound by residues 72 to 73, arginine 99, lysine 100, lysine 103, histidine 105, and 124 to 132; these read YK and DDVITAGTA. Orotate is bound by residues threonine 128 and arginine 156.

The protein belongs to the purine/pyrimidine phosphoribosyltransferase family. PyrE subfamily. Homodimer. Requires Mg(2+) as cofactor.

It carries out the reaction orotidine 5'-phosphate + diphosphate = orotate + 5-phospho-alpha-D-ribose 1-diphosphate. Its pathway is pyrimidine metabolism; UMP biosynthesis via de novo pathway; UMP from orotate: step 1/2. Catalyzes the transfer of a ribosyl phosphate group from 5-phosphoribose 1-diphosphate to orotate, leading to the formation of orotidine monophosphate (OMP). This is Orotate phosphoribosyltransferase from Salmonella choleraesuis (strain SC-B67).